We begin with the raw amino-acid sequence, 402 residues long: 26S proteasome non-ATPase regulatory subunit 4 homolog (402 aa).

Residues 5–189 (ATMICIDNSE…LSDVLISTPI (185 aa)) form the VWFA domain. Residues 221–240 (NVDPELALALRLSMEEERAR) enclose the UIM 1 domain. Over residues 241–261 (QEAIAKKAAEESSGAENKDHA) the composition is skewed to basic and acidic residues. 2 disordered regions span residues 241 to 292 (QEAI…EDDD) and 302 to 321 (MSMEEGSSGAAAADAAMAEA). UIM domains lie at 291–310 (DDAQLLQQALAMSMEEGSSG) and 323–342 (VDDQDLALALQMSVQDAGGS). Residues 363 to 402 (SLPGVDPNDPSVKDLLASLHGQGEQEKKEDKSDKPEDEKK) are disordered. Over residues 385 to 402 (GEQEKKEDKSDKPEDEKK) the composition is skewed to basic and acidic residues.

It belongs to the proteasome subunit S5A family. Component of the 19S regulatory particle (RP/PA700) base subcomplex of the 26S proteasome. The 26S proteasome is composed of a core protease (CP), known as the 20S proteasome, capped at one or both ends by the 19S regulatory particle (RP/PA700). The RP/PA700 complex is composed of at least 17 different subunits in two subcomplexes, the base and the lid, which form the portions proximal and distal to the 20S proteolytic core, respectively. Interacts with PI4KG4.

Functionally, plays a role in maintaining the structural integrity of the 19S regulatory particle (RP), subcomplex of the 26S proteasome. Plays a major role in both the direct and indirect recognition of ubiquitinated substrates of ubiquitin/26S proteasome-mediated proteolysis (UPP). Binds and presumably selects ubiquitin-conjugates for destruction. The protein is 26S proteasome non-ATPase regulatory subunit 4 homolog of Oryza sativa subsp. japonica (Rice).